The primary structure comprises 185 residues: ATP synthase subunit delta (185 aa).

Belongs to the ATPase delta chain family. As to quaternary structure, F-type ATPases have 2 components, F(1) - the catalytic core - and F(0) - the membrane proton channel. F(1) has five subunits: alpha(3), beta(3), gamma(1), delta(1), epsilon(1). F(0) has three main subunits: a(1), b(2) and c(10-14). The alpha and beta chains form an alternating ring which encloses part of the gamma chain. F(1) is attached to F(0) by a central stalk formed by the gamma and epsilon chains, while a peripheral stalk is formed by the delta and b chains.

It is found in the cell inner membrane. Functionally, f(1)F(0) ATP synthase produces ATP from ADP in the presence of a proton or sodium gradient. F-type ATPases consist of two structural domains, F(1) containing the extramembraneous catalytic core and F(0) containing the membrane proton channel, linked together by a central stalk and a peripheral stalk. During catalysis, ATP synthesis in the catalytic domain of F(1) is coupled via a rotary mechanism of the central stalk subunits to proton translocation. This protein is part of the stalk that links CF(0) to CF(1). It either transmits conformational changes from CF(0) to CF(1) or is implicated in proton conduction. In Ehrlichia chaffeensis (strain ATCC CRL-10679 / Arkansas), this protein is ATP synthase subunit delta.